We begin with the raw amino-acid sequence, 87 residues long: Small ribosomal subunit protein eS21 (87 aa).

This sequence belongs to the eukaryotic ribosomal protein eS21 family. Component of the small ribosomal subunit. Mature ribosomes consist of a small (40S) and a large (60S) subunit. The 40S subunit contains about 33 different proteins and 1 molecule of RNA (18S). The 60S subunit contains about 49 different proteins and 3 molecules of RNA (25S, 5.8S and 5S).

The protein localises to the cytoplasm. In terms of biological role, required for the processing of the 20S rRNA-precursor to mature 18S rRNA in a late step of the maturation of 40S ribosomal subunits. Has a physiological role leading to 18S rRNA stability. The protein is Small ribosomal subunit protein eS21 (RPS21) of Kluyveromyces lactis (strain ATCC 8585 / CBS 2359 / DSM 70799 / NBRC 1267 / NRRL Y-1140 / WM37) (Yeast).